We begin with the raw amino-acid sequence, 83 residues long: Cardiotoxin 7a (83 aa).

Residues 1–21 (MKTLLLTLVVVTIVCLDLGYT) form the signal peptide. 4 disulfides stabilise this stretch: Cys24-Cys43, Cys36-Cys61, Cys65-Cys76, and Cys77-Cys82.

The protein belongs to the three-finger toxin family. Short-chain subfamily. Orphan group XV sub-subfamily. As to expression, expressed by the venom gland.

It localises to the secreted. Its subcellular location is the target cell membrane. In terms of biological role, has low cytotoxic activity. This Naja atra (Chinese cobra) protein is Cardiotoxin 7a.